Consider the following 239-residue polypeptide: Tumor protein p53-inducible nuclear protein 1 (239 aa).

The short motif at 25 to 37 (EKEDDEWILVDFI) is the LIR element.

Interacts with p53/TP53 and HIPK2. Interacts with PRKCG, GABARAP, GABARAPL1, GABARAPL2, MAP1LC3A, MAP1LC3B and MAP1LC3C. In terms of tissue distribution, ubiquitously expressed with highest levels in the thymus.

It localises to the cytoplasm. Its subcellular location is the cytosol. The protein resides in the nucleus. The protein localises to the PML body. It is found in the cytoplasmic vesicle. It localises to the autophagosome. In terms of biological role, antiproliferative and proapoptotic protein involved in cell stress response which acts as a dual regulator of transcription and autophagy. Acts as a positive regulator of autophagy. In response to cellular stress or activation of autophagy, relocates to autophagosomes where it interacts with autophagosome-associated proteins GABARAP, GABARAPL1/L2, MAP1LC3A/B/C and regulates autophagy. Acts as an antioxidant and plays a major role in p53/TP53-driven oxidative stress response. Possesses both a p53/TP53-independent intracellular reactive oxygen species (ROS) regulatory function and a p53/TP53-dependent transcription regulatory function. Positively regulates p53/TP53 and p73/TP73 and stimulates their capacity to induce apoptosis and regulate cell cycle. In response to double-strand DNA breaks, promotes p53/TP53 phosphorylation on 'Ser-46' and subsequent apoptosis. Acts as a tumor suppressor by inducing cell death by an autophagy and caspase-dependent mechanism. Can reduce cell migration by regulating the expression of SPARC. The chain is Tumor protein p53-inducible nuclear protein 1 (Trp53inp1) from Mus musculus (Mouse).